A 359-amino-acid chain; its full sequence is Peptide chain release factor 1 (359 aa).

Gln-235 carries the post-translational modification N5-methylglutamine. A disordered region spans residues 285 to 305 (KRDSEISQMRKSQIGSGDRSE). Polar residues predominate over residues 290 to 299 (ISQMRKSQIG).

This sequence belongs to the prokaryotic/mitochondrial release factor family. Post-translationally, methylated by PrmC. Methylation increases the termination efficiency of RF1.

The protein resides in the cytoplasm. Its function is as follows. Peptide chain release factor 1 directs the termination of translation in response to the peptide chain termination codons UAG and UAA. This chain is Peptide chain release factor 1, found in Ehrlichia canis (strain Jake).